The primary structure comprises 236 residues: Small ribosomal subunit protein uS3 (236 aa).

Residues 39–107 (VRQFLTKELK…PAQINISEVR (69 aa)) form the KH type-2 domain.

It belongs to the universal ribosomal protein uS3 family. In terms of assembly, part of the 30S ribosomal subunit. Forms a tight complex with proteins S10 and S14.

Functionally, binds the lower part of the 30S subunit head. Binds mRNA in the 70S ribosome, positioning it for translation. This is Small ribosomal subunit protein uS3 from Aeromonas salmonicida (strain A449).